The following is a 269-amino-acid chain: SF-assemblin (269 aa).

The interval 1-23 is disordered; sequence MSISPGRSFSPMRASGLTGITSA. A nonhelical region region spans residues 1–24; that stretch reads MSISPGRSFSPMRASGLTGITSAG. Residues 25–269 form a rod region; that stretch reads PTAKLEHVSE…LQEGLKLVST (245 aa). Residues 98–144 are a coiled coil; that stretch reads AERSAAQHVDMQNSLKQAVDSLSNRLQDLHSLVREEREQRRNDIEHL.

It belongs to the SF-assemblin family.

Its subcellular location is the cytoplasm. It is found in the cytoskeleton. Major component of the striated microtubule-associated fibers (SMAFs; system-I-fibers). This is SF-assemblin from Chlamydomonas moewusii (Chlamydomonas eugametos).